The sequence spans 170 residues: MLIIGKKLSPYALLSISGLLAASDQAVKWLVQQSMAYGEYVSVTPFFNWVHLWNTGAAFSLFANGGGWQRYFFIGIAVVVSIFLIKLILENRHKGEAIAYSLILGGAMGNLIDRVFRGYVVDSFDFYWRDWHWPAFNLADIAIVLGALLFVSSSLLGKKANTNAEPDGSD.

2 helical membrane-spanning segments follow: residues 71–91 and 97–116; these read YFFI…ILEN and AIAY…DRVF. Residues D122 and D140 contribute to the active site. A helical transmembrane segment spans residues 131–151; sequence WHWPAFNLADIAIVLGALLFV.

Belongs to the peptidase A8 family.

The protein localises to the cell inner membrane. It catalyses the reaction Release of signal peptides from bacterial membrane prolipoproteins. Hydrolyzes -Xaa-Yaa-Zaa-|-(S,diacylglyceryl)Cys-, in which Xaa is hydrophobic (preferably Leu), and Yaa (Ala or Ser) and Zaa (Gly or Ala) have small, neutral side chains.. The protein operates within protein modification; lipoprotein biosynthesis (signal peptide cleavage). In terms of biological role, this protein specifically catalyzes the removal of signal peptides from prolipoproteins. In Serratia marcescens, this protein is Lipoprotein signal peptidase.